The primary structure comprises 860 residues: Alanine--tRNA ligase (860 aa).

The Zn(2+) site is built by H553, H557, C655, and H659.

This sequence belongs to the class-II aminoacyl-tRNA synthetase family. It depends on Zn(2+) as a cofactor.

It is found in the cytoplasm. The enzyme catalyses tRNA(Ala) + L-alanine + ATP = L-alanyl-tRNA(Ala) + AMP + diphosphate. Its function is as follows. Catalyzes the attachment of alanine to tRNA(Ala) in a two-step reaction: alanine is first activated by ATP to form Ala-AMP and then transferred to the acceptor end of tRNA(Ala). Also edits incorrectly charged Ser-tRNA(Ala) and Gly-tRNA(Ala) via its editing domain. In Legionella pneumophila (strain Corby), this protein is Alanine--tRNA ligase.